The primary structure comprises 382 residues: Heme A synthase (382 aa).

The next 8 helical transmembrane spans lie at 25-45, 112-132, 138-158, 176-196, 211-231, 270-290, 303-323, and 327-347; these read GAVR…VAVG, LLGR…WARG, LLLG…IGWI, LALH…LAAG, VVAG…GLVA, LALV…VAIA, AAAG…GLGI, and LLHV…AVLI. Position 277 (H277) interacts with heme. H338 contacts heme.

It belongs to the COX15/CtaA family. Type 2 subfamily. As to quaternary structure, interacts with CtaB. Requires heme b as cofactor.

The protein localises to the cell membrane. It carries out the reaction Fe(II)-heme o + 2 A + H2O = Fe(II)-heme a + 2 AH2. Its pathway is porphyrin-containing compound metabolism; heme A biosynthesis; heme A from heme O: step 1/1. In terms of biological role, catalyzes the conversion of heme O to heme A by two successive hydroxylations of the methyl group at C8. The first hydroxylation forms heme I, the second hydroxylation results in an unstable dihydroxymethyl group, which spontaneously dehydrates, resulting in the formyl group of heme A. The sequence is that of Heme A synthase from Methylorubrum extorquens (strain PA1) (Methylobacterium extorquens).